Here is a 98-residue protein sequence, read N- to C-terminus: Integration host factor subunit alpha (98 aa).

The segment at 49–70 (FGNFDLRDKNQRPGRNPKTGED) is disordered.

Belongs to the bacterial histone-like protein family. As to quaternary structure, heterodimer of an alpha and a beta chain.

This protein is one of the two subunits of integration host factor, a specific DNA-binding protein that functions in genetic recombination as well as in transcriptional and translational control. This is Integration host factor subunit alpha from Serratia proteamaculans (strain 568).